We begin with the raw amino-acid sequence, 265 residues long: Mlc titration factor A (265 aa).

Zn(2+) contacts are provided by histidine 111, histidine 148, histidine 152, and glutamate 211.

It belongs to the MtfA family. In terms of assembly, interacts with Mlc. Zn(2+) is required as a cofactor.

The protein localises to the cytoplasm. Functionally, involved in the modulation of the activity of the glucose-phosphotransferase system (glucose-PTS). Interacts with the transcriptional repressor Mlc, preventing its interaction with DNA and leading to the modulation of expression of genes regulated by Mlc, including ptsG, which encodes the PTS system glucose-specific EIICB component. Its function is as follows. Shows zinc-dependent metallopeptidase activity. This Salmonella choleraesuis (strain SC-B67) protein is Mlc titration factor A.